The chain runs to 461 residues: Putative transcription initiation factor IIB-like protein (461 aa).

Residues 113–142 (SESLENIQSENSENNDNFTDNNTKKSPTKS) form a disordered region. Residues 121–137 (SENSENNDNFTDNNTKK) show a composition bias toward low complexity. The segment at 141 to 173 (KSRICSGCGSKGTLLEDQSSSVLVCSECGMIND) adopts a TFIIB-type zinc-finger fold. Residues Cys145, Cys165, and Cys168 each coordinate Zn(2+). Tandem repeats lie at residues 246–327 (ISTI…EKKV) and 360–430 (IRRH…DVTI).

The protein belongs to the TFIIB family.

The sequence is that of Putative transcription initiation factor IIB-like protein from Acanthamoeba polyphaga mimivirus (APMV).